A 345-amino-acid chain; its full sequence is S-adenosylmethionine:tRNA ribosyltransferase-isomerase (345 aa).

The protein belongs to the QueA family. Monomer.

It is found in the cytoplasm. The enzyme catalyses 7-aminomethyl-7-carbaguanosine(34) in tRNA + S-adenosyl-L-methionine = epoxyqueuosine(34) in tRNA + adenine + L-methionine + 2 H(+). It functions in the pathway tRNA modification; tRNA-queuosine biosynthesis. Transfers and isomerizes the ribose moiety from AdoMet to the 7-aminomethyl group of 7-deazaguanine (preQ1-tRNA) to give epoxyqueuosine (oQ-tRNA). The chain is S-adenosylmethionine:tRNA ribosyltransferase-isomerase from Acinetobacter baumannii (strain ATCC 17978 / DSM 105126 / CIP 53.77 / LMG 1025 / NCDC KC755 / 5377).